A 344-amino-acid polypeptide reads, in one-letter code: Anthranilate phosphoribosyltransferase (344 aa).

5-phospho-alpha-D-ribose 1-diphosphate-binding positions include Gly81, Gly84 to Asp85, Ser89, Asn91 to Thr94, Lys109 to Ser117, and Ala121. Position 81 (Gly81) interacts with anthranilate. Ser93 is a binding site for Mg(2+). Asn112 contributes to the anthranilate binding site. Arg167 is an anthranilate binding site. Mg(2+) contacts are provided by Asp226 and Glu227.

This sequence belongs to the anthranilate phosphoribosyltransferase family. In terms of assembly, homodimer. Requires Mg(2+) as cofactor.

The catalysed reaction is N-(5-phospho-beta-D-ribosyl)anthranilate + diphosphate = 5-phospho-alpha-D-ribose 1-diphosphate + anthranilate. Its pathway is amino-acid biosynthesis; L-tryptophan biosynthesis; L-tryptophan from chorismate: step 2/5. In terms of biological role, catalyzes the transfer of the phosphoribosyl group of 5-phosphorylribose-1-pyrophosphate (PRPP) to anthranilate to yield N-(5'-phosphoribosyl)-anthranilate (PRA). This is Anthranilate phosphoribosyltransferase from Azorhizobium caulinodans (strain ATCC 43989 / DSM 5975 / JCM 20966 / LMG 6465 / NBRC 14845 / NCIMB 13405 / ORS 571).